The primary structure comprises 294 residues: 4-hydroxybenzoate octaprenyltransferase (294 aa).

8 consecutive transmembrane segments (helical) span residues Ile24–Phe44, Leu47–Ile67, Leu99–Val119, Phe139–Phe159, Gly164–Tyr184, Val213–Ala233, Pro238–Ile258, and Asn274–Ala294.

It belongs to the UbiA prenyltransferase family. Requires Mg(2+) as cofactor.

It localises to the cell inner membrane. It carries out the reaction all-trans-octaprenyl diphosphate + 4-hydroxybenzoate = 4-hydroxy-3-(all-trans-octaprenyl)benzoate + diphosphate. It participates in cofactor biosynthesis; ubiquinone biosynthesis. Its function is as follows. Catalyzes the prenylation of para-hydroxybenzoate (PHB) with an all-trans polyprenyl group. Mediates the second step in the final reaction sequence of ubiquinone-8 (UQ-8) biosynthesis, which is the condensation of the polyisoprenoid side chain with PHB, generating the first membrane-bound Q intermediate 3-octaprenyl-4-hydroxybenzoate. The chain is 4-hydroxybenzoate octaprenyltransferase from Aromatoleum aromaticum (strain DSM 19018 / LMG 30748 / EbN1) (Azoarcus sp. (strain EbN1)).